Reading from the N-terminus, the 163-residue chain is UPF0262 protein RPD_4278 (163 aa).

It belongs to the UPF0262 family.

The protein is UPF0262 protein RPD_4278 of Rhodopseudomonas palustris (strain BisB5).